We begin with the raw amino-acid sequence, 367 residues long: Glutamate 5-kinase (367 aa).

Lysine 10 contributes to the ATP binding site. Substrate is bound by residues serine 50, aspartate 137, and asparagine 149. Position 169 to 170 (threonine 169 to aspartate 170) interacts with ATP. One can recognise a PUA domain in the interval alanine 275–glutamate 353.

It belongs to the glutamate 5-kinase family.

It localises to the cytoplasm. The catalysed reaction is L-glutamate + ATP = L-glutamyl 5-phosphate + ADP. The protein operates within amino-acid biosynthesis; L-proline biosynthesis; L-glutamate 5-semialdehyde from L-glutamate: step 1/2. Catalyzes the transfer of a phosphate group to glutamate to form L-glutamate 5-phosphate. The protein is Glutamate 5-kinase of Salmonella paratyphi B (strain ATCC BAA-1250 / SPB7).